Here is an 830-residue protein sequence, read N- to C-terminus: MEKASKNKESGVKKANNSFLQNFGVNTAGKENESTSLPRLPKSEDESIPKQSIKSKNKKKTQHFLSDAFESLKRQEIDTNEKEVIVSAPITSKPAQVFYSKKLERKDEGIRKWEKDPFAPISVKSGAWKKPYTKVPEVSINKATSKRTDLINDKPIVIPIPRASTSTLYFGKHNKPTSENRKGPIGIPTEEILTSQNTQAMLHKLFENNVLDNVKDDSMQRQSSFIPGMHIRLLDHQVQGLTWLKSRETVSKSSASGGILADDMGLGKTIQMIALILSHPLPKKKHSIKSTLVVAPLSLIKQWESEVQTKSKLTAIVYHGASRYKLLKVIHEYDVVITTYQILVSEWVSHNTTGTDGKSPTEAKSYEKKKPSLFAFYWWRIILDEAHTIKNKSSKSALACCALQGINRWCLTGTPLQNNVDELYSLVKFLHINPFNDQSVWKDQISLPLCQGEENLVFKRLRMLLSVIMLRRTKTLLEANAGKDGTGGALKLSKRLVYKVICKFEESERDFYSNLARNMERTMSNFVNSGKLGKNYTNILCLLLRLRQACNHPQSLNFQFEQDVDAFNALDGAANTNKLASDQDVDDLANLLETVEIGSRKKSFCTICMAELPPDFHEKKCKDCSRNFKELDKGIQDPNDKTLYKSSKIREILKILSLDEQEEDDTVRGLRKTIIFSQFTTFLDIIDLHLRKAGIGFVRYDGRMNNRAREKSLDLLRSDSGTQVLLCSLKCGALGLNLTCASRVILCDVWWNPAIEEQAIDRVHRIGQRRDVLVYKLVVENTIEEKIVELQNLKRDLAKQALGDGKKSVFTSKKLTLNDLLFLFNKRAAA.

Residues 1 to 12 (MEKASKNKESGV) show a composition bias toward basic and acidic residues. A disordered region spans residues 1-61 (MEKASKNKES…SIKSKNKKKT (61 aa)). Over residues 15 to 25 (ANNSFLQNFGV) the composition is skewed to polar residues. One can recognise a Helicase ATP-binding domain in the interval 249-433 (TVSKSSASGG…YSLVKFLHIN (185 aa)). 262 to 269 (DDMGLGKT) contributes to the ATP binding site. The DEAH box motif lies at 384 to 387 (DEAH). The 155-residue stretch at 662-816 (EEDDTVRGLR…KSVFTSKKLT (155 aa)) folds into the Helicase C-terminal domain. Position 712 is a phosphoserine (S712).

The protein belongs to the SNF2/RAD54 helicase family.

Its subcellular location is the nucleus. This is an uncharacterized protein from Schizosaccharomyces pombe (strain 972 / ATCC 24843) (Fission yeast).